A 246-amino-acid chain; its full sequence is Small ribosomal subunit protein uS2 (246 aa).

The protein belongs to the universal ribosomal protein uS2 family.

This is Small ribosomal subunit protein uS2 from Dictyoglomus thermophilum (strain ATCC 35947 / DSM 3960 / H-6-12).